The primary structure comprises 575 residues: uncharacterized protein (575 aa).

A run of 6 helical transmembrane segments spans residues 16-36 (FFLD…FPLI), 50-70 (WGLI…SSAL), 132-152 (PEDL…MLFI), 154-174 (WQLA…ALYF), 243-263 (ISYM…TWFV), and 264-284 (IRGS…NVLF). One can recognise an ABC transmembrane type-1 domain in the interval 16–299 (FFLDFFSAIA…INAIIEMYPR (284 aa)). Residues 333 to 567 (IRYKHVSFGY…GGLYSRLHQA (235 aa)) enclose the ABC transporter domain. 366 to 373 (GPSGAGKS) provides a ligand contact to ATP.

The protein belongs to the ABC transporter superfamily.

The protein resides in the cell membrane. It localises to the membrane raft. This is an uncharacterized protein from Bacillus subtilis (strain 168).